Here is a 242-residue protein sequence, read N- to C-terminus: Transcriptional activator protein BjaR1 (242 aa).

The HTH luxR-type domain maps to 173 to 238; it reads TPYPSTRLTP…HAVALAIRHK (66 aa). Positions 197-216 form a DNA-binding region, H-T-H motif; the sequence is AWEIGEILHITQRTAEEHLA.

It belongs to the autoinducer-regulated transcriptional regulatory protein family.

Transcriptional activator that functions in response to the quorum-sensing autoinducer IV-HSL (isovaleryl-homoserine lactone). Activates BjaI expression. Is sensitive to IV-HSL at concentrations as low as 10 pM. The chain is Transcriptional activator protein BjaR1 (bjaR1) from Bradyrhizobium diazoefficiens (strain JCM 10833 / BCRC 13528 / IAM 13628 / NBRC 14792 / USDA 110).